We begin with the raw amino-acid sequence, 380 residues long: Chorismate synthase (380 aa).

Arg-48 provides a ligand contact to NADP(+). FMN contacts are provided by residues 126–128, Gly-300, 315–319, and Arg-342; these read HFS and KPISS.

It belongs to the chorismate synthase family. In terms of assembly, homotetramer. It depends on FMNH2 as a cofactor.

The enzyme catalyses 5-O-(1-carboxyvinyl)-3-phosphoshikimate = chorismate + phosphate. It functions in the pathway metabolic intermediate biosynthesis; chorismate biosynthesis; chorismate from D-erythrose 4-phosphate and phosphoenolpyruvate: step 7/7. In terms of biological role, catalyzes the anti-1,4-elimination of the C-3 phosphate and the C-6 proR hydrogen from 5-enolpyruvylshikimate-3-phosphate (EPSP) to yield chorismate, which is the branch point compound that serves as the starting substrate for the three terminal pathways of aromatic amino acid biosynthesis. This reaction introduces a second double bond into the aromatic ring system. This is Chorismate synthase from Lancefieldella parvula (strain ATCC 33793 / DSM 20469 / CCUG 32760 / JCM 10300 / KCTC 3663 / VPI 0546 / 1246) (Atopobium parvulum).